Here is a 137-residue protein sequence, read N- to C-terminus: MANKPSAEELKKNLSDMQFYVTQNHGTEPPFTGRLLHNKRDGVYHCLICDAPLFHSQTKYDSGCGWPSFYEPVSEESIRYIKDLSHGVQRIEIRCGNCDAHLGHVFPDGPQPTGERYCVNSASLRFTDGENGEEING.

The MsrB domain occupies 7–129; that stretch reads AEELKKNLSD…NSASLRFTDG (123 aa). Cys-46, Cys-49, Cys-95, and Cys-98 together coordinate Zn(2+). Catalysis depends on Cys-118, which acts as the Nucleophile.

Belongs to the MsrB Met sulfoxide reductase family. Zn(2+) is required as a cofactor.

It carries out the reaction L-methionyl-[protein] + [thioredoxin]-disulfide + H2O = L-methionyl-(R)-S-oxide-[protein] + [thioredoxin]-dithiol. This is Peptide methionine sulfoxide reductase MsrB from Shigella dysenteriae serotype 1 (strain Sd197).